A 738-amino-acid polypeptide reads, in one-letter code: Polyphosphate kinase (738 aa).

The disordered stretch occupies residues 1–48 (MIGNDRWVTEIETGPVTEARPDTNAREPGDRTPAAPPAATPAATTDQL). The span at 19 to 30 (ARPDTNAREPGD) shows a compositional bias: basic and acidic residues. Asparagine 91 is a binding site for ATP. Residues arginine 427 and arginine 457 each contribute to the Mg(2+) site. Residue histidine 487 is the Phosphohistidine intermediate of the active site. Residues tyrosine 520, arginine 620, and histidine 648 each contribute to the ATP site.

The protein belongs to the polyphosphate kinase 1 (PPK1) family. The cofactor is Mg(2+). In terms of processing, an intermediate of this reaction is the autophosphorylated ppk in which a phosphate is covalently linked to a histidine residue through a N-P bond.

The catalysed reaction is [phosphate](n) + ATP = [phosphate](n+1) + ADP. Its function is as follows. Catalyzes the reversible transfer of the terminal phosphate of ATP to form a long-chain polyphosphate (polyP). The sequence is that of Polyphosphate kinase from Mycobacterium marinum (strain ATCC BAA-535 / M).